Reading from the N-terminus, the 486-residue chain is UDP-N-acetylmuramoyl-L-alanyl-D-glutamate--2,6-diaminopimelate ligase (486 aa).

S33 serves as a coordination point for UDP-N-acetyl-alpha-D-muramoyl-L-alanyl-D-glutamate. ATP is bound at residue G110–S116. UDP-N-acetyl-alpha-D-muramoyl-L-alanyl-D-glutamate is bound by residues T152–T153, S179, Q185, and R187. Residue K219 is modified to N6-carboxylysine. Meso-2,6-diaminopimelate contacts are provided by residues R383, D407 to R410, G455, and E459. Positions D407 to R410 match the Meso-diaminopimelate recognition motif motif.

The protein belongs to the MurCDEF family. MurE subfamily. It depends on Mg(2+) as a cofactor. Carboxylation is probably crucial for Mg(2+) binding and, consequently, for the gamma-phosphate positioning of ATP.

Its subcellular location is the cytoplasm. The enzyme catalyses UDP-N-acetyl-alpha-D-muramoyl-L-alanyl-D-glutamate + meso-2,6-diaminopimelate + ATP = UDP-N-acetyl-alpha-D-muramoyl-L-alanyl-gamma-D-glutamyl-meso-2,6-diaminopimelate + ADP + phosphate + H(+). The protein operates within cell wall biogenesis; peptidoglycan biosynthesis. Its function is as follows. Catalyzes the addition of meso-diaminopimelic acid to the nucleotide precursor UDP-N-acetylmuramoyl-L-alanyl-D-glutamate (UMAG) in the biosynthesis of bacterial cell-wall peptidoglycan. This Zymomonas mobilis subsp. mobilis (strain ATCC 31821 / ZM4 / CP4) protein is UDP-N-acetylmuramoyl-L-alanyl-D-glutamate--2,6-diaminopimelate ligase.